A 431-amino-acid polypeptide reads, in one-letter code: Enolase (431 aa).

Q167 is a binding site for (2R)-2-phosphoglycerate. Residue E209 is the Proton donor of the active site. Mg(2+) is bound by residues D246, E290, and D317. (2R)-2-phosphoglycerate-binding residues include K342, R371, S372, and K393. The active-site Proton acceptor is the K342.

It belongs to the enolase family. In terms of assembly, component of the RNA degradosome, a multiprotein complex involved in RNA processing and mRNA degradation. Mg(2+) is required as a cofactor.

The protein resides in the cytoplasm. It is found in the secreted. The protein localises to the cell surface. It catalyses the reaction (2R)-2-phosphoglycerate = phosphoenolpyruvate + H2O. Its pathway is carbohydrate degradation; glycolysis; pyruvate from D-glyceraldehyde 3-phosphate: step 4/5. Catalyzes the reversible conversion of 2-phosphoglycerate (2-PG) into phosphoenolpyruvate (PEP). It is essential for the degradation of carbohydrates via glycolysis. The chain is Enolase from Yersinia pestis bv. Antiqua (strain Antiqua).